The sequence spans 418 residues: Fumarylacetoacetase (418 aa).

Ca(2+) is bound at residue D127. H134 functions as the Proton acceptor in the catalytic mechanism. 3 residues coordinate Ca(2+): E200, E202, and D235. D235, K255, and T259 together coordinate Mg(2+).

It belongs to the FAH family. Ca(2+) is required as a cofactor. The cofactor is Mg(2+). In terms of tissue distribution, highly expressed in the intestine and the hypodermis.

It catalyses the reaction 4-fumarylacetoacetate + H2O = acetoacetate + fumarate + H(+). It participates in amino-acid degradation; L-phenylalanine degradation; acetoacetate and fumarate from L-phenylalanine: step 6/6. Its function is as follows. Fumarylacetoacetase involved in the tyrosine degradation pathway. The chain is Fumarylacetoacetase from Caenorhabditis elegans.